The chain runs to 456 residues: Chordin-like protein 1 (456 aa).

A signal peptide spans 1-27 (MRKKWKMGGMKYIFSLLFFLLLEGGKT). VWFC domains follow at residues 35-100 (TYCM…PRCP) and 113-179 (KSCE…RVCR). N-linked (GlcNAc...) asparagine glycosylation is present at N118. Positions 179–181 (RGD) match the Cell attachment site motif. Residues 202–223 (ARHSYHRSHYDPPPSRQAGGLS) are disordered. A VWFC 3 domain is found at 258–323 (QVCVSNGKTY…IDGKCCKVCP (66 aa)). N-linked (GlcNAc...) asparagine glycosylation is present at N291.

In terms of tissue distribution, expressed in the developing cornea and in the eye anterior segment in addition to the retina. Differentially expressed in the fetal brain. There is high expression in cerebellum and neocortex. Expressed in retinal pericytes.

The protein localises to the secreted. Functionally, antagonizes the function of BMP4 by binding to it and preventing its interaction with receptors. Alters the fate commitment of neural stem cells from gliogenesis to neurogenesis. Contributes to neuronal differentiation of neural stem cells in the brain by preventing the adoption of a glial fate. May play a crucial role in dorsoventral axis formation. May play a role in embryonic bone formation. May also play an important role in regulating retinal angiogenesis through modulation of BMP4 actions in endothelial cells. Plays a role during anterior segment eye development. The sequence is that of Chordin-like protein 1 (CHRDL1) from Homo sapiens (Human).